Reading from the N-terminus, the 275-residue chain is Large ribosomal subunit protein uL2 (275 aa).

2 disordered regions span residues 28 to 59 (KPFA…GGHK) and 224 to 275 (AMNP…RHKR). Positions 35 to 49 (DSQSTTAGRNNNGHI) are enriched in polar residues. The span at 50–59 (TTRHKGGGHK) shows a compositional bias: basic residues.

Belongs to the universal ribosomal protein uL2 family. As to quaternary structure, part of the 50S ribosomal subunit. Forms a bridge to the 30S subunit in the 70S ribosome.

One of the primary rRNA binding proteins. Required for association of the 30S and 50S subunits to form the 70S ribosome, for tRNA binding and peptide bond formation. It has been suggested to have peptidyltransferase activity; this is somewhat controversial. Makes several contacts with the 16S rRNA in the 70S ribosome. This chain is Large ribosomal subunit protein uL2, found in Paraburkholderia xenovorans (strain LB400).